A 278-amino-acid chain; its full sequence is Orotidine 5'-phosphate decarboxylase (278 aa).

Residue Lys-95 is the Proton donor of the active site.

The protein belongs to the OMP decarboxylase family. Type 2 subfamily.

It carries out the reaction orotidine 5'-phosphate + H(+) = UMP + CO2. The protein operates within pyrimidine metabolism; UMP biosynthesis via de novo pathway; UMP from orotate: step 2/2. The polypeptide is Orotidine 5'-phosphate decarboxylase (Corynebacterium glutamicum (strain ATCC 13032 / DSM 20300 / JCM 1318 / BCRC 11384 / CCUG 27702 / LMG 3730 / NBRC 12168 / NCIMB 10025 / NRRL B-2784 / 534)).